We begin with the raw amino-acid sequence, 252 residues long: Cell division protein ZapD (252 aa).

The protein belongs to the ZapD family. Interacts with FtsZ.

The protein resides in the cytoplasm. Its function is as follows. Cell division factor that enhances FtsZ-ring assembly. Directly interacts with FtsZ and promotes bundling of FtsZ protofilaments, with a reduction in FtsZ GTPase activity. This is Cell division protein ZapD from Cupriavidus pinatubonensis (strain JMP 134 / LMG 1197) (Cupriavidus necator (strain JMP 134)).